The following is a 178-amino-acid chain: ATP-dependent protease subunit HslV (178 aa).

Residue threonine 7 is part of the active site. The Na(+) site is built by glycine 162, cysteine 165, and threonine 168.

This sequence belongs to the peptidase T1B family. HslV subfamily. As to quaternary structure, a double ring-shaped homohexamer of HslV is capped on each side by a ring-shaped HslU homohexamer. The assembly of the HslU/HslV complex is dependent on binding of ATP.

Its subcellular location is the cytoplasm. It catalyses the reaction ATP-dependent cleavage of peptide bonds with broad specificity.. With respect to regulation, allosterically activated by HslU binding. Functionally, protease subunit of a proteasome-like degradation complex believed to be a general protein degrading machinery. The polypeptide is ATP-dependent protease subunit HslV (Azoarcus sp. (strain BH72)).